The sequence spans 297 residues: Small ribosomal subunit biogenesis GTPase RsgA (297 aa).

The region spanning 65–223 (RNELVRPPVA…VADTPGFSAI (159 aa)) is the CP-type G domain. GTP contacts are provided by residues 114–117 (TKVD) and 166–174 (GQSGAGKST). 4 residues coordinate Zn(2+): cysteine 247, cysteine 252, histidine 254, and cysteine 260.

The protein belongs to the TRAFAC class YlqF/YawG GTPase family. RsgA subfamily. As to quaternary structure, monomer. Associates with 30S ribosomal subunit, binds 16S rRNA. Zn(2+) serves as cofactor.

It localises to the cytoplasm. In terms of biological role, one of several proteins that assist in the late maturation steps of the functional core of the 30S ribosomal subunit. Helps release RbfA from mature subunits. May play a role in the assembly of ribosomal proteins into the subunit. Circularly permuted GTPase that catalyzes slow GTP hydrolysis, GTPase activity is stimulated by the 30S ribosomal subunit. The sequence is that of Small ribosomal subunit biogenesis GTPase RsgA from Enterococcus faecalis (strain ATCC 700802 / V583).